Reading from the N-terminus, the 219-residue chain is 7-cyano-7-deazaguanine synthase (219 aa).

Phe-10–Leu-20 contributes to the ATP binding site. Cys-186, Cys-195, Cys-198, and Cys-201 together coordinate Zn(2+).

Belongs to the QueC family. Homodimer. The cofactor is Zn(2+).

It carries out the reaction 7-carboxy-7-deazaguanine + NH4(+) + ATP = 7-cyano-7-deazaguanine + ADP + phosphate + H2O + H(+). It functions in the pathway purine metabolism; 7-cyano-7-deazaguanine biosynthesis. Its function is as follows. Catalyzes the ATP-dependent conversion of 7-carboxy-7-deazaguanine (CDG) to 7-cyano-7-deazaguanine (preQ(0)). The chain is 7-cyano-7-deazaguanine synthase from Bacillus velezensis (strain DSM 23117 / BGSC 10A6 / LMG 26770 / FZB42) (Bacillus amyloliquefaciens subsp. plantarum).